The sequence spans 86 residues: Anti-adapter protein IraP (86 aa).

The stretch at 1–36 (MKNLIAELLFKLAQKEEESKELCAQVEALEIIVTAM) forms a coiled coil.

Belongs to the IraP family. In terms of assembly, interacts with RssB.

It localises to the cytoplasm. Its function is as follows. Inhibits RpoS proteolysis by regulating RssB activity, thereby increasing the stability of the sigma stress factor RpoS especially during phosphate starvation, but also in stationary phase and during nitrogen starvation. Its effect on RpoS stability is due to its interaction with RssB, which probably blocks the interaction of RssB with RpoS, and the consequent delivery of the RssB-RpoS complex to the ClpXP protein degradation pathway. The chain is Anti-adapter protein IraP from Escherichia coli O127:H6 (strain E2348/69 / EPEC).